A 1236-amino-acid chain; its full sequence is ATP-dependent helicase/nuclease subunit A (1236 aa).

The UvrD-like helicase ATP-binding domain occupies 4 to 473 (VKWTKEQQQA…VNLFKNFRSR (470 aa)). An ATP-binding site is contributed by 25–32 (AAAGSGKT). A UvrD-like helicase C-terminal domain is found at 512-806 (YEDKSLVGGP…RIMSIHKSKG (295 aa)).

Belongs to the helicase family. AddA subfamily. As to quaternary structure, heterodimer of AddA and AddB/RexB. It depends on Mg(2+) as a cofactor.

It carries out the reaction Couples ATP hydrolysis with the unwinding of duplex DNA by translocating in the 3'-5' direction.. The enzyme catalyses ATP + H2O = ADP + phosphate + H(+). Its function is as follows. The heterodimer acts as both an ATP-dependent DNA helicase and an ATP-dependent, dual-direction single-stranded exonuclease. Recognizes the chi site generating a DNA molecule suitable for the initiation of homologous recombination. The AddA nuclease domain is required for chi fragment generation; this subunit has the helicase and 3' -&gt; 5' nuclease activities. The sequence is that of ATP-dependent helicase/nuclease subunit A from Clostridium novyi (strain NT).